Reading from the N-terminus, the 340-residue chain is Uroporphyrinogen decarboxylase (340 aa).

Substrate is bound by residues 21–25 (RQAGR), D71, Y148, S203, and H316.

The protein belongs to the uroporphyrinogen decarboxylase family. Homodimer.

The protein localises to the cytoplasm. It catalyses the reaction uroporphyrinogen III + 4 H(+) = coproporphyrinogen III + 4 CO2. Its pathway is porphyrin-containing compound metabolism; protoporphyrin-IX biosynthesis; coproporphyrinogen-III from 5-aminolevulinate: step 4/4. In terms of biological role, catalyzes the decarboxylation of four acetate groups of uroporphyrinogen-III to yield coproporphyrinogen-III. This chain is Uroporphyrinogen decarboxylase, found in Campylobacter jejuni subsp. jejuni serotype O:23/36 (strain 81-176).